A 348-amino-acid chain; its full sequence is Probable WRKY transcription factor 27 (348 aa).

Disordered regions lie at residues 19-52, 67-90, 133-153, and 218-320; these read VSTTNSCAGHEDDIGNCKQQQDPPPPPLFQASSS, TTTTTTTWSPPPLLPPPKASSPSP, LLQQQSQPPLRSRKRKNQQKR, and GEHT…LIPN. Over residues 75 to 85 the composition is skewed to pro residues; it reads SPPPLLPPPKA. The segment covering 133–142 has biased composition (low complexity); the sequence is LLQQQSQPPL. A compositionally biased stretch (basic residues) spans 143–153; sequence RSRKRKNQQKR. Residues 159 to 225 constitute a DNA-binding region (WRKY); that stretch reads TQENLSSDLW…YTGEHTHPRP (67 aa). Residues 228–242 are compositionally biased toward polar residues; the sequence is RNSLAGSTRNKSQPV. Positions 274-315 are enriched in acidic residues; that stretch reads DVQETNGDEDMVGQEVNMEEEEEEEEVEEDDEEEEDDDDVDD.

It belongs to the WRKY group II-e family.

It localises to the nucleus. Functionally, transcription factor. Interacts specifically with the W box (5'-(T)TGAC[CT]-3'), a frequently occurring elicitor-responsive cis-acting element. This is Probable WRKY transcription factor 27 (WRKY27) from Arabidopsis thaliana (Mouse-ear cress).